The chain runs to 416 residues: MQPTPFSSLSSADGCWTGLRLAQGLFIPDVAVPDDALSCVVVQGGTVRWVGPVAAVPPAFAALPRHAGGGALATPGLVDCHTHLVYGGHRANEFAMRLAGASYEEVARAGGGIVSSVKATRAASEDELFAQALPRLQALLDEGVCAIEIKSGYGLALEHERKQLRAARRLGEACGVTVRTTFLGAHALPPEYAGRSQDYIDLVCREMLPALAEEGLVDAVDVFCERIAFSLAETEQVFQAAQALGLPVKLHAEQLSDMDGARLAARYGALSCDHIEHLSAEGIAAMKAAGTVAVLLPGAYYTLRDTHLPPIQALREAGVPMAVSTDHNPGTSPALSLRLMANMACTLFRLTVPEALAGITTHAARALGLQDTHGLIAAGRPADFVLWPFAEAAELAYWFGHQPPQAIVRQGRVVQR.

His81 and His83 together coordinate Fe(3+). Zn(2+) contacts are provided by His81 and His83. Residues Arg90, Tyr153, and His186 each contribute to the 4-imidazolone-5-propanoate site. Residue Tyr153 coordinates N-formimidoyl-L-glutamate. His251 contributes to the Fe(3+) binding site. His251 lines the Zn(2+) pocket. Gln254 serves as a coordination point for 4-imidazolone-5-propanoate. Asp326 is a Fe(3+) binding site. Asp326 is a binding site for Zn(2+). Positions 328 and 330 each coordinate N-formimidoyl-L-glutamate. Thr331 contacts 4-imidazolone-5-propanoate.

Belongs to the metallo-dependent hydrolases superfamily. HutI family. The cofactor is Zn(2+). Requires Fe(3+) as cofactor.

The protein localises to the cytoplasm. It catalyses the reaction 4-imidazolone-5-propanoate + H2O = N-formimidoyl-L-glutamate. It functions in the pathway amino-acid degradation; L-histidine degradation into L-glutamate; N-formimidoyl-L-glutamate from L-histidine: step 3/3. In terms of biological role, catalyzes the hydrolytic cleavage of the carbon-nitrogen bond in imidazolone-5-propanoate to yield N-formimidoyl-L-glutamate. It is the third step in the universal histidine degradation pathway. The chain is Imidazolonepropionase from Paracidovorax citrulli (strain AAC00-1) (Acidovorax citrulli).